A 207-amino-acid chain; its full sequence is Small ribosomal subunit protein uS4 (207 aa).

Residues 33 to 54 (KLDSKPGQHGRTSGARTSDYGN) form a disordered region. Positions 42-53 (GRTSGARTSDYG) are enriched in polar residues. An S4 RNA-binding domain is found at 97-157 (SRLDNVVYRM…EKSKKQVRIA (61 aa)).

This sequence belongs to the universal ribosomal protein uS4 family. In terms of assembly, part of the 30S ribosomal subunit. Contacts protein S5. The interaction surface between S4 and S5 is involved in control of translational fidelity.

Its function is as follows. One of the primary rRNA binding proteins, it binds directly to 16S rRNA where it nucleates assembly of the body of the 30S subunit. Functionally, with S5 and S12 plays an important role in translational accuracy. The chain is Small ribosomal subunit protein uS4 from Ralstonia pickettii (strain 12J).